A 630-amino-acid chain; its full sequence is tRNA uridine 5-carboxymethylaminomethyl modification enzyme MnmG (630 aa).

13–18 (GGGHAG) provides a ligand contact to FAD. NAD(+) is bound at residue 273-287 (GPRYCPSIEDKIHRF).

Belongs to the MnmG family. Homodimer. Heterotetramer of two MnmE and two MnmG subunits. It depends on FAD as a cofactor.

It is found in the cytoplasm. Its function is as follows. NAD-binding protein involved in the addition of a carboxymethylaminomethyl (cmnm) group at the wobble position (U34) of certain tRNAs, forming tRNA-cmnm(5)s(2)U34. In Pseudomonas aeruginosa (strain LESB58), this protein is tRNA uridine 5-carboxymethylaminomethyl modification enzyme MnmG.